The chain runs to 481 residues: NADH-quinone oxidoreductase subunit N (481 aa).

13 helical membrane passes run 14–34, 38–57, 76–96, 108–128, 162–182, 204–224, 235–255, 272–292, 297–317, 323–343, 369–389, 403–423, and 449–469; these read LILS…GDGF, IGWG…TGPA, FAKL…PGFF, PVLI…GDLL, FVLG…LYGF, MFGM…VPFH, PTPV…ALLL, IVVF…IGQT, LLAY…AAGS, ATMT…ICVL, LAAA…LFGF, GFWP…FYYL, and GLIT…IPLL.

This sequence belongs to the complex I subunit 2 family. As to quaternary structure, NDH-1 is composed of 14 different subunits. Subunits NuoA, H, J, K, L, M, N constitute the membrane sector of the complex.

It localises to the cell inner membrane. The enzyme catalyses a quinone + NADH + 5 H(+)(in) = a quinol + NAD(+) + 4 H(+)(out). Functionally, NDH-1 shuttles electrons from NADH, via FMN and iron-sulfur (Fe-S) centers, to quinones in the respiratory chain. The immediate electron acceptor for the enzyme in this species is believed to be ubiquinone. Couples the redox reaction to proton translocation (for every two electrons transferred, four hydrogen ions are translocated across the cytoplasmic membrane), and thus conserves the redox energy in a proton gradient. This chain is NADH-quinone oxidoreductase subunit N, found in Rhizorhabdus wittichii (strain DSM 6014 / CCUG 31198 / JCM 15750 / NBRC 105917 / EY 4224 / RW1) (Sphingomonas wittichii).